Here is a 77-residue protein sequence, read N- to C-terminus: U11-lycotoxin-Ls1a (77 aa).

The N-terminal stretch at 1–20 is a signal peptide; sequence MKLIILTGLVLFAIVSLIEA. Residues 21 to 26 constitute a propeptide that is removed on maturation; that stretch reads EEESGR.

Belongs to the neurotoxin 19 (CSTX) family. 10 (U11-Lctx) subfamily. In terms of processing, contains 4 disulfide bonds. Expressed by the venom gland.

Its subcellular location is the secreted. The chain is U11-lycotoxin-Ls1a from Lycosa singoriensis (Wolf spider).